Consider the following 414-residue polypeptide: Multidrug resistance protein MdtG (414 aa).

10 helical membrane passes run 14 to 34 (LFVTWLGCFLTGAAFSLIMPF), 56 to 76 (LVFSITFLFSAIAAPFWGSLA), 89 to 109 (ALGMGIVMVLMGMAQNIWQFL), 113 to 133 (ALLGLLGGFIPNANALIATQV), 144 to 164 (TLSTGGVSGALIGPLIGGLLA), 171 to 191 (PVFFITAAVLFACFVMTWFYV), 219 to 239 (ILSLFVTTMIIQIATGSIAPI), 254 to 274 (LAFVSGMIASVPGVAALISAP), 288 to 308 (ILIAMLALSVLILIPMAFVQT), and 376 to 396 (AVFCVTAVVVLFNALYSYWCL).

This sequence belongs to the major facilitator superfamily. DHA1 family. MdtG (TC 2.A.1.2.20) subfamily.

It is found in the cell inner membrane. The chain is Multidrug resistance protein MdtG from Yersinia enterocolitica serotype O:8 / biotype 1B (strain NCTC 13174 / 8081).